The following is a 320-amino-acid chain: Pyrroline-5-carboxylate reductase 2 (320 aa).

S2 carries the post-translational modification N-acetylserine. Residues 6–11 and S34 contribute to the NADP(+) site; that span reads IGAGQL. A8, Q10, L11, S34, E36, N56, V70, K71, and A97 together coordinate NADPH. NADP(+) is bound by residues N56, 69-72, and 95-97; these read AVKP and CAA. E164 lines the L-proline pocket. N230 serves as a coordination point for NADPH. L-proline-binding residues include A237 and T238. Over residues 296–305 the composition is skewed to low complexity; that stretch reads TVSTLTPSSP. A disordered region spans residues 296 to 320; the sequence is TVSTLTPSSPGKLLTRSLALGGKKD. S304 bears the Phosphoserine mark.

The protein belongs to the pyrroline-5-carboxylate reductase family. As to quaternary structure, homodecamer; composed of 5 homodimers. Interacts with LTO1.

It is found in the cytoplasm. The protein localises to the mitochondrion. It carries out the reaction L-proline + NADP(+) = (S)-1-pyrroline-5-carboxylate + NADPH + 2 H(+). It catalyses the reaction L-proline + NAD(+) = (S)-1-pyrroline-5-carboxylate + NADH + 2 H(+). Its pathway is amino-acid biosynthesis; L-proline biosynthesis; L-proline from L-glutamate 5-semialdehyde: step 1/1. In terms of biological role, oxidoreductase that catalyzes the last step in proline biosynthesis, which corresponds to the reduction of pyrroline-5-carboxylate to L-proline using NAD(P)H. At physiologic concentrations, has higher specific activity in the presence of NADH. Involved in cellular response to oxidative stress. In some cell types, such as erythrocytes, its primary function may be the generation of NADP(+). The protein is Pyrroline-5-carboxylate reductase 2 (PYCR2) of Pongo abelii (Sumatran orangutan).